Consider the following 178-residue polypeptide: Large ribosomal subunit protein uL6 (178 aa).

This sequence belongs to the universal ribosomal protein uL6 family. As to quaternary structure, part of the 50S ribosomal subunit.

In terms of biological role, this protein binds to the 23S rRNA, and is important in its secondary structure. It is located near the subunit interface in the base of the L7/L12 stalk, and near the tRNA binding site of the peptidyltransferase center. This chain is Large ribosomal subunit protein uL6, found in Nautilia profundicola (strain ATCC BAA-1463 / DSM 18972 / AmH).